A 300-amino-acid polypeptide reads, in one-letter code: uncharacterized protein (300 aa).

A coiled-coil region spans residues 67 to 179 (LAFEELEKEK…IAKANELKDS (113 aa)). Low complexity predominate over residues 203-285 (STTASLSQSE…PSSQSTYQQQ (83 aa)). Residues 203 to 300 (STTASLSQSE…KGFFARLFNL (98 aa)) form a disordered region.

This is an uncharacterized protein from Staphylococcus epidermidis (strain ATCC 12228 / FDA PCI 1200).